The chain runs to 346 residues: tRNA N6-adenosine threonylcarbamoyltransferase (346 aa).

H111 and H115 together coordinate Fe cation. Substrate is bound by residues 134–138, D167, G180, D184, and N280; that span reads LVSGG. D308 contributes to the Fe cation binding site.

It belongs to the KAE1 / TsaD family. Fe(2+) is required as a cofactor.

The protein resides in the cytoplasm. The enzyme catalyses L-threonylcarbamoyladenylate + adenosine(37) in tRNA = N(6)-L-threonylcarbamoyladenosine(37) in tRNA + AMP + H(+). In terms of biological role, required for the formation of a threonylcarbamoyl group on adenosine at position 37 (t(6)A37) in tRNAs that read codons beginning with adenine. Is involved in the transfer of the threonylcarbamoyl moiety of threonylcarbamoyl-AMP (TC-AMP) to the N6 group of A37, together with TsaE and TsaB. TsaD likely plays a direct catalytic role in this reaction. This Crocosphaera subtropica (strain ATCC 51142 / BH68) (Cyanothece sp. (strain ATCC 51142)) protein is tRNA N6-adenosine threonylcarbamoyltransferase.